A 308-amino-acid polypeptide reads, in one-letter code: Homoserine kinase (308 aa).

Position 85 to 95 (85 to 95) interacts with ATP; sequence PLTRGLGSSAA.

It belongs to the GHMP kinase family. Homoserine kinase subfamily.

The protein localises to the cytoplasm. It catalyses the reaction L-homoserine + ATP = O-phospho-L-homoserine + ADP + H(+). It participates in amino-acid biosynthesis; L-threonine biosynthesis; L-threonine from L-aspartate: step 4/5. Functionally, catalyzes the ATP-dependent phosphorylation of L-homoserine to L-homoserine phosphate. The chain is Homoserine kinase from Caldicellulosiruptor saccharolyticus (strain ATCC 43494 / DSM 8903 / Tp8T 6331).